A 185-amino-acid chain; its full sequence is Iron-sulfur assembly protein 2 (185 aa).

Fe cation contacts are provided by cysteine 89, cysteine 175, and cysteine 177.

This sequence belongs to the HesB/IscA family.

The protein localises to the mitochondrion matrix. In terms of biological role, involved in the assembly of mitochondrial and cytoplasmic iron-sulfur proteins. Probably involved in the binding of an intermediate of Fe/S cluster assembly. This chain is Iron-sulfur assembly protein 2 (ISA2), found in Saccharomyces cerevisiae (strain ATCC 204508 / S288c) (Baker's yeast).